The sequence spans 467 residues: MMETNNENKEKLKLYTWDEVSKHNQKNDLWIIVDGKVYNITKWVPLHPGGEDILLLSAGRDATNLFESYHPMTDKHYSLIKQYEIGYISSYEHPKYVEKSEFYSTLKQRVRKHFQTSSQDPKVSVGVFTRMVLIYLFLFVTYYLSQFSTDRFWLNCIFAVLYGVANSLFGLHTMHDACHTAITHNPMTWKILGATFDLFAGASFYAWCHQHVIGHHLYTNVRNADPDLGQGEIDFRVVTPYQARSWYHKYQHIYAPILYGVYALKYRIQDHEIFTKKSNGAIRYSPISTIDTAIFILGKLVFIISRFILPLIYNHSFSHLICFFLISELVLGWYLAISFQVSHVVEDLQFMATPEIFDGADHPLPTTFNQDWAILQVKTTQDYAQDSVLSTFFSGGLNLQVIHHCFPTIAQDYYPQIVPILKEVCKEYNVTYHYKPTFTEAIKSHINYLYKMGNDPDYVRKPVNKND.

A Cytochrome b5 heme-binding domain is found at 12–89 (LKLYTWDEVS…IKQYEIGYIS (78 aa)). Heme is bound by residues His-47 and His-70. 2 consecutive transmembrane segments (helical) span residues 123–143 (VSVGVFTRMVLIYLFLFVTYY) and 152–172 (FWLNCIFAVLYGVANSLFGLH). The short motif at 175–179 (HDACH) is the Histidine box-1 element. The helical transmembrane segment at 187–207 (MTWKILGATFDLFAGASFYAW) threads the bilayer. The Histidine box-2 signature appears at 211 to 216 (HVIGHH). 2 helical membrane-spanning segments follow: residues 293-313 (AIFILGKLVFIISRFILPLIY) and 317-337 (FSHLICFFLISELVLGWYLAI). The Histidine box-3 signature appears at 400–404 (QVIHH).

It belongs to the fatty acid desaturase type 1 family. It depends on Fe(2+) as a cofactor.

The protein localises to the membrane. The enzyme catalyses an (8Z,11Z,14Z)-icosatrienoyl-containing glycerolipid + 2 Fe(II)-[cytochrome b5] + O2 + 2 H(+) = (5Z,8Z,11Z,14Z)-eicosatetraenoyl-containing glycerolipid + 2 Fe(III)-[cytochrome b5] + 2 H2O. It carries out the reaction an (8Z,11Z,14Z,17Z)-eicosatetraenoyl-containing glycerolipid + 2 Fe(II)-[cytochrome b5] + O2 + 2 H(+) = a (5Z,8Z,11Z,14Z,17Z)-eicosapentaenoyl-containing glycerolipid + 2 Fe(III)-[cytochrome b5] + 2 H2O. In terms of biological role, fatty acid desaturase that introduces a cis double bond at the 5-position in 18-carbon polyunsaturated fatty acids. The polypeptide is Acyl-lipid (8-3)-desaturase B (fadB) (Dictyostelium discoideum (Social amoeba)).